A 243-amino-acid polypeptide reads, in one-letter code: Transmembrane protein 174 (243 aa).

Helical transmembrane passes span 40–60 (LLFS…MGWI) and 73–93 (LLGP…VCKF).

As to quaternary structure, interacts with SLC34A1; regulates SLC34A1 internalization by PTH and FGF23.

The protein resides in the endoplasmic reticulum membrane. The protein localises to the apical cell membrane. Its function is as follows. Regulator of plasma phosphate homeostasis. Decreases serum inorganic phosphate (Pi) uptake by regulating the sodium-phosphate cotransporter SLC34A1 trafficking by PTH and FGF23 in the kidney. This is Transmembrane protein 174 (TMEM174) from Pongo abelii (Sumatran orangutan).